The chain runs to 322 residues: Ribose-phosphate pyrophosphokinase 1 (322 aa).

ATP is bound by residues 39 to 41 (DGE) and 98 to 99 (RQ). Mg(2+)-binding residues include His-132 and Asp-173. Lys-196 is a catalytic residue. D-ribose 5-phosphate-binding positions include Arg-198, Asp-224, and 228–232 (DTAGT).

It belongs to the ribose-phosphate pyrophosphokinase family. Class I subfamily. Homohexamer. It depends on Mg(2+) as a cofactor.

It is found in the cytoplasm. The catalysed reaction is D-ribose 5-phosphate + ATP = 5-phospho-alpha-D-ribose 1-diphosphate + AMP + H(+). The protein operates within metabolic intermediate biosynthesis; 5-phospho-alpha-D-ribose 1-diphosphate biosynthesis; 5-phospho-alpha-D-ribose 1-diphosphate from D-ribose 5-phosphate (route I): step 1/1. In terms of biological role, involved in the biosynthesis of the central metabolite phospho-alpha-D-ribosyl-1-pyrophosphate (PRPP) via the transfer of pyrophosphoryl group from ATP to 1-hydroxyl of ribose-5-phosphate (Rib-5-P). The sequence is that of Ribose-phosphate pyrophosphokinase 1 from Streptococcus agalactiae serotype III (strain NEM316).